The chain runs to 126 residues: Prefoldin subunit beta (126 aa).

This sequence belongs to the prefoldin subunit beta family. Heterohexamer of two alpha and four beta subunits.

The protein resides in the cytoplasm. In terms of biological role, molecular chaperone capable of stabilizing a range of proteins. Seems to fulfill an ATP-independent, HSP70-like function in archaeal de novo protein folding. This chain is Prefoldin subunit beta, found in Pyrobaculum neutrophilum (strain DSM 2338 / JCM 9278 / NBRC 100436 / V24Sta) (Thermoproteus neutrophilus).